Consider the following 389-residue polypeptide: GDP-fucose protein O-fucosyltransferase 1 (389 aa).

Positions 1 to 21 (MRVSKVLTLASFISVCSYSEA) are cleaved as a signal peptide. An N-linked (GlcNAc...) asparagine glycan is attached at Asn24. A disulfide bond links Cys35 and Cys37. Position 40 to 43 (40 to 43 (RFGN)) interacts with substrate. A disulfide bridge links Cys119 with Cys135. A substrate-binding site is contributed by 238 to 240 (HLR). Intrachain disulfides connect Cys249-Cys281 and Cys266-Cys353. 356-357 (TF) lines the substrate pocket.

It belongs to the glycosyltransferase 65 family. In terms of assembly, monomer.

It is found in the endoplasmic reticulum. It carries out the reaction L-seryl-[protein] + GDP-beta-L-fucose = 3-O-(alpha-L-fucosyl)-L-seryl-[protein] + GDP + H(+). It catalyses the reaction L-threonyl-[protein] + GDP-beta-L-fucose = 3-O-(alpha-L-fucosyl)-L-threonyl-[protein] + GDP + H(+). It functions in the pathway protein modification; protein glycosylation. Catalyzes the reaction that attaches fucose through an O-glycosidic linkage to a conserved serine or threonine residue found in the consensus sequence C2-X(4,5)-[S/T]-C3 of EGF domains, where C2 and C3 are the second and third conserved cysteines. Specifically uses GDP-fucose as donor substrate and proper disulfide pairing of the substrate EGF domains is required for fucose transfer. This is GDP-fucose protein O-fucosyltransferase 1 from Caenorhabditis elegans.